The following is a 132-amino-acid chain: Large ribosomal subunit protein bL17 (132 aa).

It belongs to the bacterial ribosomal protein bL17 family. Part of the 50S ribosomal subunit. Contacts protein L32.

The chain is Large ribosomal subunit protein bL17 from Ralstonia pickettii (strain 12J).